We begin with the raw amino-acid sequence, 464 residues long: ATP synthase subunit beta (464 aa).

150–157 (GGAGVGKT) is an ATP binding site.

It belongs to the ATPase alpha/beta chains family. In terms of assembly, F-type ATPases have 2 components, CF(1) - the catalytic core - and CF(0) - the membrane proton channel. CF(1) has five subunits: alpha(3), beta(3), gamma(1), delta(1), epsilon(1). CF(0) has three main subunits: a(1), b(2) and c(9-12). The alpha and beta chains form an alternating ring which encloses part of the gamma chain. CF(1) is attached to CF(0) by a central stalk formed by the gamma and epsilon chains, while a peripheral stalk is formed by the delta and b chains.

The protein localises to the cell membrane. The catalysed reaction is ATP + H2O + 4 H(+)(in) = ADP + phosphate + 5 H(+)(out). Its function is as follows. Produces ATP from ADP in the presence of a proton gradient across the membrane. The catalytic sites are hosted primarily by the beta subunits. This is ATP synthase subunit beta from Dehalococcoides mccartyi (strain ATCC BAA-2100 / JCM 16839 / KCTC 5957 / BAV1).